The primary structure comprises 454 residues: GA-binding protein alpha chain (454 aa).

The region spanning 168–251 (AALEGYRKEQ…SHLELLRKYV (84 aa)) is the PNT domain. The segment at 295–316 (KVQRSPRISGEDRSSPGNRTGN) is disordered. S303 bears the Phosphoserine mark. Positions 320–400 (IQLWQFLLEL…QGKRFVYKFV (81 aa)) form a DNA-binding region, ETS.

The protein belongs to the ETS family. Heterotetramer of two alpha and two beta subunits. Ubiquitous.

Its subcellular location is the nucleus. Its function is as follows. Transcription factor capable of interacting with purine rich repeats (GA repeats). Positively regulates transcription of transcriptional repressor Rhit/Zpf13. The protein is GA-binding protein alpha chain (Gabpa) of Mus musculus (Mouse).